The chain runs to 25 residues: Xenoposin precursor fragment R2 (25 aa).

In terms of tissue distribution, expressed by the skin glands.

It localises to the secreted. Functionally, antimicrobial peptide. This is Xenoposin precursor fragment R2 from Xenopus ruwenzoriensis (Uganda clawed frog).